The following is a 203-amino-acid chain: Outer-membrane lipoprotein carrier protein (203 aa).

The signal sequence occupies residues 1-21; sequence MKKMAIACALLSSVVASSVWA. Residues 178-203 form a disordered region; sequence QQNGAVDPSKFTFTPPQGVTIDDQRK.

Belongs to the LolA family. Monomer.

It localises to the periplasm. Its function is as follows. Participates in the translocation of lipoproteins from the inner membrane to the outer membrane. Only forms a complex with a lipoprotein if the residue after the N-terminal Cys is not an aspartate (The Asp acts as a targeting signal to indicate that the lipoprotein should stay in the inner membrane). The protein is Outer-membrane lipoprotein carrier protein of Salmonella paratyphi A (strain ATCC 9150 / SARB42).